We begin with the raw amino-acid sequence, 523 residues long: Sialate O-acetylesterase (523 aa).

The N-terminal stretch at 1-23 is a signal peptide; that stretch reads MVAPGLVLGLVLPLILWADRSAG. N-linked (GlcNAc...) asparagine glycans are attached at residues asparagine 107, asparagine 138, asparagine 267, asparagine 290, asparagine 401, and asparagine 422.

The protein resides in the lysosome. It carries out the reaction N-acetyl-9-O-acetylneuraminate + H2O = N-acetylneuraminate + acetate + H(+). The enzyme catalyses an Ac-O-9-sialoglycoconjugate + H2O = a sialoglycoconjugate + acetate + H(+). Functionally, catalyzes the removal of O-acetyl ester groups from position 9 of the free diacetylated sialate N-acetyl-9-O-acetylneuraminate (Neu5,9Ac2) in the cytosol and of the diacetylated sialate residues of sialylglycoconjugates in the lysosomes. Together with the sialate-O-acetyltransferase they regulate the balance of acetylated sialoglycoconjugates, key players in various processes such as cell-cell interactions, host-pathogen recognition, and tumor antigenicity. In Pongo abelii (Sumatran orangutan), this protein is Sialate O-acetylesterase (SIAE).